Consider the following 255-residue polypeptide: Small ribosomal subunit protein eS1 (255 aa).

N-acetylalanine; partial is present on Ala-2.

Belongs to the eukaryotic ribosomal protein eS1 family. As to quaternary structure, component of the small ribosomal subunit. Mature ribosomes consist of a small (40S) and a large (60S) subunit. The 40S subunit contains about 33 different proteins and 1 molecule of RNA (18S). The 60S subunit contains about 49 different proteins and 3 molecules of RNA (25S, 5.8S and 5S).

Its subcellular location is the cytoplasm. The sequence is that of Small ribosomal subunit protein eS1 from Kluyveromyces lactis (strain ATCC 8585 / CBS 2359 / DSM 70799 / NBRC 1267 / NRRL Y-1140 / WM37) (Yeast).